We begin with the raw amino-acid sequence, 746 residues long: WD repeat-containing and planar cell polarity effector protein fritz homolog (746 aa).

2 WD repeats span residues 326-374 (IQCV…TLLA) and 375-414 (QTELLPSLISCHPSGAILLVGSNQGELQIFDMALSPINIQ).

The protein belongs to the WD repeat fritz family. As to quaternary structure, component of the CPLANE (ciliogenesis and planar polarity effectors) complex, composed of INTU, FUZ and WDPCP. Interacts with CPLANE1.

The protein localises to the cell membrane. It localises to the cytoplasm. It is found in the cytoskeleton. The protein resides in the cilium axoneme. Its subcellular location is the cilium basal body. Its function is as follows. Probable effector of the planar cell polarity signaling pathway which regulates the septin cytoskeleton in both ciliogenesis and collective cell movements. Together with FUZ and WDPCP proposed to function as core component of the CPLANE (ciliogenesis and planar polarity effectors) complex involved in the recruitment of peripheral IFT-A proteins to basal bodies. Binds phosphatidylinositol 3-phosphate with highest affinity, followed by phosphatidylinositol 4-phosphate and phosphatidylinositol 5-phosphate. The chain is WD repeat-containing and planar cell polarity effector protein fritz homolog (WDPCP) from Homo sapiens (Human).